Here is a 696-residue protein sequence, read N- to C-terminus: MAIEKYFIPDFVELQRRSFQRFLETGLIEELNKRNPITNSQKDLEILLYPEYYKLAPPRWNSLDAILLSKTYSCRLYVPAQLTNRKTKQIMFKWVQLGDIPLMSKRGHFVVNGAARVIINQIVRGPGLYFSEIQYNVDSSKKTLVRRYAAEFISMRGTWLRLSIDKEKMIWAELKKTPKIPLVWFLLGMGLTEKILFQSLTQPKRLLYNYLDYLKIDNLAIDVKSQNDAFAKRALLRELLLKSKLNSSNIKTLKNSKDFKPLLLVNDIYSEMHSYKEKENRRYPLNSQNGDLADEKEKIPYYANSSLKALELIYSKITNTKKITNLNKKFFAKQGQKWIFKKFMNPRTYDLGLHGRLSLNKKLSLSLPLSQRTLTMYDVLVATEHLLRVEQGLLGTDDIDNLKNRRVRTSSDLIQMQIGIGLLRLEKNIRSKFTTIKGVPKINYFFSTKPLNGALKEFFGTNPLSQFMDMINPLAEMTHKRRLTTLGPGGVSRDTATMDIRGIHPTHYGRICPVETPEGKNAGLVNALTTFARVNPEGLIETPFYKVYKGQVQKKAGFFYLSAEKEEKAIIAAGDLNLSKTGFLPKGLIPVRKFDEFTKVLRNYVDFMSVSPLQMISVATSLVPFLEHDDANRALMGANMQRQAVPLVRSEQAIVGTGIETRIASDSGHVIRAKAGGLVGYVSGQKIRIYTFVSNF.

It belongs to the RNA polymerase beta chain family. As to quaternary structure, in plastids the minimal PEP RNA polymerase catalytic core is composed of four subunits: alpha, beta, beta', and beta''. When a (nuclear-encoded) sigma factor is associated with the core the holoenzyme is formed, which can initiate transcription.

It localises to the plastid. The protein localises to the chloroplast. It carries out the reaction RNA(n) + a ribonucleoside 5'-triphosphate = RNA(n+1) + diphosphate. In terms of biological role, DNA-dependent RNA polymerase catalyzes the transcription of DNA into RNA using the four ribonucleoside triphosphates as substrates. The protein is DNA-directed RNA polymerase subunit beta N-terminal section (rpoB1) of Stigeoclonium helveticum (Green alga).